Consider the following 861-residue polypeptide: DNA mismatch repair protein MutS (861 aa).

Residue 616 to 623 (GPNMGGKS) coordinates ATP.

This sequence belongs to the DNA mismatch repair MutS family.

Its function is as follows. This protein is involved in the repair of mismatches in DNA. It is possible that it carries out the mismatch recognition step. This protein has a weak ATPase activity. The polypeptide is DNA mismatch repair protein MutS (Haemophilus influenzae (strain PittEE)).